The following is a 118-amino-acid chain: Ribulose bisphosphate carboxylase small subunit 2 (118 aa).

This sequence belongs to the RuBisCO small chain family. As to quaternary structure, heterohexadecamer of 8 large and 8 small subunits.

RuBisCO catalyzes two reactions: the carboxylation of D-ribulose 1,5-bisphosphate, the primary event in carbon dioxide fixation, as well as the oxidative fragmentation of the pentose substrate. Both reactions occur simultaneously and in competition at the same active site. Although the small subunit is not catalytic it is essential for maximal activity. This chain is Ribulose bisphosphate carboxylase small subunit 2, found in Acidithiobacillus ferrooxidans (Thiobacillus ferrooxidans).